The following is a 466-amino-acid chain: Exodeoxyribonuclease 7 large subunit (466 aa).

This sequence belongs to the XseA family. In terms of assembly, heterooligomer composed of large and small subunits.

It is found in the cytoplasm. The enzyme catalyses Exonucleolytic cleavage in either 5'- to 3'- or 3'- to 5'-direction to yield nucleoside 5'-phosphates.. Its function is as follows. Bidirectionally degrades single-stranded DNA into large acid-insoluble oligonucleotides, which are then degraded further into small acid-soluble oligonucleotides. The chain is Exodeoxyribonuclease 7 large subunit from Ruthia magnifica subsp. Calyptogena magnifica.